The following is a 485-amino-acid chain: Glutamyl-tRNA(Gln) amidotransferase subunit A (485 aa).

Residues Lys79 and Ser154 each act as charge relay system in the active site. Ser178 (acyl-ester intermediate) is an active-site residue.

The protein belongs to the amidase family. GatA subfamily. In terms of assembly, heterotrimer of A, B and C subunits.

The catalysed reaction is L-glutamyl-tRNA(Gln) + L-glutamine + ATP + H2O = L-glutaminyl-tRNA(Gln) + L-glutamate + ADP + phosphate + H(+). Its function is as follows. Allows the formation of correctly charged Gln-tRNA(Gln) through the transamidation of misacylated Glu-tRNA(Gln) in organisms which lack glutaminyl-tRNA synthetase. The reaction takes place in the presence of glutamine and ATP through an activated gamma-phospho-Glu-tRNA(Gln). The sequence is that of Glutamyl-tRNA(Gln) amidotransferase subunit A from Staphylococcus aureus (strain bovine RF122 / ET3-1).